A 628-amino-acid polypeptide reads, in one-letter code: Chaperone protein DnaK (628 aa).

Residue Thr195 is modified to Phosphothreonine; by autocatalysis. The interval 545-628 is disordered; it reads QLEENEGAAQ…VIDADFKAAE (84 aa). Positions 555–591 are enriched in basic and acidic residues; sequence DAKDALKAAADEAEEAVRSEDDARIESAQKRLEEELR. Positions 596–612 are enriched in low complexity; sequence AQQAAGQGQPQGAQAQG. The span at 614–628 shows a compositional bias: basic and acidic residues; that stretch reads KADDDVIDADFKAAE.

Belongs to the heat shock protein 70 family.

Functionally, acts as a chaperone. This chain is Chaperone protein DnaK, found in Deinococcus deserti (strain DSM 17065 / CIP 109153 / LMG 22923 / VCD115).